Consider the following 60-residue polypeptide: Large ribosomal subunit protein uL30 (60 aa).

This sequence belongs to the universal ribosomal protein uL30 family. In terms of assembly, part of the 50S ribosomal subunit.

The protein is Large ribosomal subunit protein uL30 of Christiangramia forsetii (strain DSM 17595 / CGMCC 1.15422 / KT0803) (Gramella forsetii).